A 187-amino-acid chain; its full sequence is Protein GrpE (187 aa).

The protein belongs to the GrpE family. Homodimer.

Its subcellular location is the cytoplasm. Participates actively in the response to hyperosmotic and heat shock by preventing the aggregation of stress-denatured proteins, in association with DnaK and GrpE. It is the nucleotide exchange factor for DnaK and may function as a thermosensor. Unfolded proteins bind initially to DnaJ; upon interaction with the DnaJ-bound protein, DnaK hydrolyzes its bound ATP, resulting in the formation of a stable complex. GrpE releases ADP from DnaK; ATP binding to DnaK triggers the release of the substrate protein, thus completing the reaction cycle. Several rounds of ATP-dependent interactions between DnaJ, DnaK and GrpE are required for fully efficient folding. The protein is Protein GrpE of Albidiferax ferrireducens (strain ATCC BAA-621 / DSM 15236 / T118) (Rhodoferax ferrireducens).